Here is an 835-residue protein sequence, read N- to C-terminus: Phosphatidylinositol 4-kinase beta (835 aa).

3 disordered regions span residues 1–61, 99–139, and 267–341; these read MGDT…PLDV, SSAS…VRRR, and PSSQ…PVRL. Low complexity predominate over residues 19 to 59; sequence SPSTSTTSSLSLPSSPSSGPHPLTSSSPSTSEGLPTSSPPL. Residues 59–262 form the PIK helical domain; that stretch reads LDVISEGLGE…GTKLRKLILS (204 aa). Composition is skewed to basic and acidic residues over residues 125–134 and 267–276; these read ISEEEVEPIK and PSSQRIRREV. Residues 277 to 288 are compositionally biased toward pro residues; it reads PQPPPPYPPPLH. Over residues 311-332 the composition is skewed to polar residues; it reads DATVSISLSSNLKRTASNPKVE. The 267-residue stretch at 554–820 folds into the PI3K/PI4K catalytic domain; the sequence is EPWQEKVRRI…MVDGSMRSIT (267 aa). The G-loop stretch occupies residues 560–566; the sequence is VRRIREG. The catalytic loop stretch occupies residues 687–695; sequence QVKDRHNGN. An activation loop region spans residues 706-730; sequence HIDFGFILSSSPRNLGFETSAFKLT.

It belongs to the PI3/PI4-kinase family. Type III PI4K subfamily. The cofactor is Mg(2+). Mn(2+) is required as a cofactor. Expressed in the inner ear otic vesicles.

It localises to the endomembrane system. The protein localises to the mitochondrion outer membrane. It is found in the rough endoplasmic reticulum membrane. The catalysed reaction is a 1,2-diacyl-sn-glycero-3-phospho-(1D-myo-inositol) + ATP = a 1,2-diacyl-sn-glycero-3-phospho-(1D-myo-inositol 4-phosphate) + ADP + H(+). In terms of biological role, phosphorylates phosphatidylinositol (PI) in the first committed step in the production of the second messenger inositol-1,4,5,-trisphosphate (PIP). May play an important role the in inner ear development. This is Phosphatidylinositol 4-kinase beta (pi4kb) from Danio rerio (Zebrafish).